Consider the following 224-residue polypeptide: MTIDTRQLGRVDYLPTYQAMQDFTAARNEATPDALWICEHPAVYTQGLAGKIDHLLNPGEIPVVQTNRGGQVTFHGPGQVVVYPLIDLKRAGYFVKEYVYRIEESVIRTLAHFGVTGHRVAGSPGIYVRMDDPFSHAALSGPVHPSDPFRGLGKIAALGIKVSRHCTYHGVALNVAMDLEPFSRINPCGYAGLKTTDLSTIGVSASWQEAASVLGQKLATYLAP.

In terms of domain architecture, BPL/LPL catalytic spans 29 to 224; the sequence is EATPDALWIC…GQKLATYLAP (196 aa). Substrate contacts are provided by residues 68–75, 157–159, and 170–172; these read RGGQVTFH, ALG, and GVA. Catalysis depends on Cys-188, which acts as the Acyl-thioester intermediate.

Belongs to the LipB family.

The protein localises to the cytoplasm. It carries out the reaction octanoyl-[ACP] + L-lysyl-[protein] = N(6)-octanoyl-L-lysyl-[protein] + holo-[ACP] + H(+). It participates in protein modification; protein lipoylation via endogenous pathway; protein N(6)-(lipoyl)lysine from octanoyl-[acyl-carrier-protein]: step 1/2. In terms of biological role, catalyzes the transfer of endogenously produced octanoic acid from octanoyl-acyl-carrier-protein onto the lipoyl domains of lipoate-dependent enzymes. Lipoyl-ACP can also act as a substrate although octanoyl-ACP is likely to be the physiological substrate. The sequence is that of Octanoyltransferase from Polaromonas naphthalenivorans (strain CJ2).